The chain runs to 214 residues: Calcineurin B homologous protein 3 (214 aa).

Gly2 carries the N-myristoyl glycine lipid modification. In terms of domain architecture, EF-hand spans 110–145; it reads CRTDKLRFLFNMYDSDNDNKITLEEYRKVVEELLSG. Asp123, Asp125, Asp127, Lys129, and Glu134 together coordinate Ca(2+).

Belongs to the calcineurin regulatory subunit family. CHP subfamily. As to quaternary structure, monomer. Homodimer.

The protein localises to the nucleus. It localises to the cytoplasm. Its subcellular location is the membrane. It is found in the cell membrane. The protein resides in the cell projection. The protein localises to the lamellipodium. It localises to the ruffle membrane. Functions as an integral cofactor in cell pH regulation by controlling plasma membrane-type Na(+)/H(+) exchange activity. Promotes the induction of hematopoietic stem cell differentiation toward megakaryocytic lineage. Essential for the coupling of ERK cascade activation with the expression of ETS family genes in megakaryocytic differentiation. Also involved in granulocytic differentiation in a ERK-dependent manner. Inhibits the phosphatase activity of calcineurin. The polypeptide is Calcineurin B homologous protein 3 (Xenopus laevis (African clawed frog)).